The following is a 384-amino-acid chain: Somatostatin receptor type 4 (384 aa).

The tract at residues M1–R34 is disordered. Over M1–A41 the chain is Extracellular. N-linked (GlcNAc...) asparagine glycosylation is present at N21. The helical transmembrane segment at G42–L69 threads the bilayer. The Cytoplasmic portion of the chain corresponds to R70–N79. The chain crosses the membrane as a helical span at residues I80 to L105. Residues R106 to R116 lie on the Extracellular side of the membrane. Cysteines 115 and 194 form a disulfide. Residues A117–V138 form a helical membrane-spanning segment. The Cytoplasmic segment spans residues D139–K160. The helical transmembrane segment at L161–A181 threads the bilayer. Over D182–W203 the chain is Extracellular. The helical transmembrane segment at S204 to L228 threads the bilayer. The Cytoplasmic portion of the chain corresponds to L229–T254. Residues R255–F280 traverse the membrane as a helical segment. Residues V281–T287 are Extracellular-facing. Residues V288–S311 traverse the membrane as a helical segment. Topologically, residues D312 to F384 are cytoplasmic. A lipid anchor (S-palmitoyl cysteine) is attached at C323.

It belongs to the G-protein coupled receptor 1 family. In terms of tissue distribution, brain, lung, heart and islets. Moderate levels in the hippocampus, cortex and olfactory bulb.

It is found in the cell membrane. Functionally, receptor for somatostatin-14. The activity of this receptor is mediated by G proteins which inhibits adenylyl cyclase. It is functionally coupled not only to inhibition of adenylate cyclase, but also to activation of both arachidonate release and mitogen-activated protein (MAP) kinase cascade. The sequence is that of Somatostatin receptor type 4 (Sstr4) from Rattus norvegicus (Rat).